A 131-amino-acid chain; its full sequence is Class I hydrophobin 9 (131 aa).

The first 23 residues, 1 to 23 (MFARRAISIFAFMLVALSIFAAA), serve as a signal peptide directing secretion. Intrachain disulfides connect Cys-52–Cys-112, Cys-59–Cys-106, Cys-60–Cys-93, and Cys-113–Cys-126. Asn-53 carries N-linked (GlcNAc...) asparagine glycosylation. An N-linked (GlcNAc...) asparagine glycan is attached at Asn-115.

This sequence belongs to the fungal hydrophobin family. In terms of assembly, self-assembles to form functional amyloid fibrils called rodlets. Self-assembly into fibrillar rodlets occurs spontaneously at hydrophobic:hydrophilic interfaces and the rodlets further associate laterally to form amphipathic monolayers.

The protein localises to the secreted. It localises to the cell wall. In terms of biological role, aerial growth, conidiation, and dispersal of filamentous fungi in the environment rely upon a capability of their secreting small amphipathic proteins called hydrophobins (HPBs) with low sequence identity. Class I can self-assemble into an outermost layer of rodlet bundles on aerial cell surfaces, conferring cellular hydrophobicity that supports fungal growth, development and dispersal; whereas Class II form highly ordered films at water-air interfaces through intermolecular interactions but contribute nothing to the rodlet structure. This Flammulina velutipes (Agaricus velutipes) protein is Class I hydrophobin 9.